The primary structure comprises 596 residues: Elongation factor 4 (596 aa).

The 183-residue stretch at 2–184 (KHIRNFSIIA…VIVAQIPPPE (183 aa)) folds into the tr-type G domain. Residues 14–19 (DHGKST) and 131–134 (NKID) contribute to the GTP site.

This sequence belongs to the TRAFAC class translation factor GTPase superfamily. Classic translation factor GTPase family. LepA subfamily.

Its subcellular location is the cell inner membrane. The enzyme catalyses GTP + H2O = GDP + phosphate + H(+). Functionally, required for accurate and efficient protein synthesis under certain stress conditions. May act as a fidelity factor of the translation reaction, by catalyzing a one-codon backward translocation of tRNAs on improperly translocated ribosomes. Back-translocation proceeds from a post-translocation (POST) complex to a pre-translocation (PRE) complex, thus giving elongation factor G a second chance to translocate the tRNAs correctly. Binds to ribosomes in a GTP-dependent manner. This Shewanella woodyi (strain ATCC 51908 / MS32) protein is Elongation factor 4.